Here is a 426-residue protein sequence, read N- to C-terminus: MLASASRERPGYTAGVAAPDLLDPKSAAQNSKPRLSFSAKPTVLASRVESDSAINVMKWKTVSTIFLVVVLYLIIGATVFKALEQPQEISQRTTIVIQKQNFIAQHACVNSTELDELIQQIVTAINAGIIPLGNNSNQVSHWDLGSSFFFAGTVITTIGFGNISPRTEGGKIFCIIYALLGIPLFGFLLAGVGDQLGTIFGKGIAKVEDTFIKWNVSQTKIRIISTIIFILFGCVLFVALPAVIFKHIEGWSALDAIYFVVITLTTIGFGDYVAGGSDIEYLDFYKPVVWFWILVGLAYFAAVLSMIGDWLRVISKKTKEEVGEFRAHAAEWTANVTAEFKETRRRLSVEIYDKFQRATSVKRKLSAELAGNHNQELTPCRRTLSVNHLTSEREVLPPLLKAESIYLNGLTPHCAAEDIAVIENMK.

Topologically, residues 1 to 61 are cytoplasmic; that stretch reads MLASASRERP…SAINVMKWKT (61 aa). Important for GNG4 binding and L-glutamate release in astrocytes stretches follow at residues 17-38 and 51-61; these read AAPD…LSFS and DSAINVMKWKT. The chain crosses the membrane as a helical span at residues 62–82; the sequence is VSTIFLVVVLYLIIGATVFKA. Asn-110 and Asn-134 each carry an N-linked (GlcNAc...) asparagine glycan. The segment at residues 144 to 170 is an intramembrane region (pore-forming); the sequence is LGSSFFFAGTVITTIGFGNISPRTEGG. 4 residues coordinate K(+): Thr-157, Ile-158, Gly-159, and Phe-160. The interval 157-162 is selectivity filter 1; the sequence is TIGFGN. The chain crosses the membrane as a helical span at residues 172 to 192; it reads IFCIIYALLGIPLFGFLLAGV. Topologically, residues 193–222 are cytoplasmic; it reads GDQLGTIFGKGIAKVEDTFIKWNVSQTKIR. A helical transmembrane segment spans residues 223–243; sequence IISTIIFILFGCVLFVALPAV. Residues 253–283 constitute an intramembrane region (pore-forming); sequence ALDAIYFVVITLTTIGFGDYVAGGSDIEYLD. The K(+) site is built by Thr-266, Ile-267, Gly-268, and Phe-269. Positions 266–271 are selectivity filter 2; it reads TIGFGD. The chain crosses the membrane as a helical span at residues 288 to 308; the sequence is VVWFWILVGLAYFAAVLSMIG. Over 309–426 the chain is Cytoplasmic; sequence DWLRVISKKT…EDIAVIENMK (118 aa). Residues 313–326 form an interaction with AKAP5 region; the sequence is VISKKTKEEVGEFR. Positions 337-385 are essential for chloroform and halothane sensitivity; it reads TAEFKETRRRLSVEIYDKFQRATSVKRKLSAELAGNHNQELTPCRRTLS. Ser-348 bears the Phosphoserine; by PKA mark.

This sequence belongs to the two pore domain potassium channel (TC 1.A.1.8) family. In terms of assembly, homodimer; disulfide-linked. Forms heterodimers with other 2-pore domain K(+) channel subunits, such as KCNK1, KCNK4, KCNK10 and KCNK18. Interacts with AKAP5; the channel is recruited to postsynaptic microdomains by AKAP5 where it can integrate neurotransmitter receptor signals. Part of a complex composed of AKAP5 and ADRB2. Upon AKAP5 binding, the channel is no longer sensitive to intracellular acidification, membrane stretch or arachidonic acid stimuli. Interacts with POPDC1; the interaction enhances KCNK2 surface expression and is inhibited by cAMP. Interacts (via N-terminus) with G-protein subunit GNG4 (via C-terminus); this interaction confers ion selectivity to L-glutamate and Cl(-) anions. Post-translationally, phosphorylation at Ser-348 controls the reversible conversion from a leak channel to a voltage-dependent channel. In terms of tissue distribution, expressed in cardiomyocytes (at protein level). Expressed in various brain regions including the lateral olfactory tract, piriform cortex of the forebrain, paraventricular and anteromedial thalamic nuclei, brainstem, caudate putamen, nucleus accumbens, neocortex and interpeduncular nucleus. Detected in astrocytes in hippocampus stratum radiatum. As to expression, expressed in brain and kidney.

It is found in the cell membrane. The protein localises to the endoplasmic reticulum membrane. The protein resides in the cell projection. It localises to the axon. Its subcellular location is the dendrite. It is found in the postsynaptic density membrane. The protein localises to the sarcolemma. The catalysed reaction is K(+)(in) = K(+)(out). It catalyses the reaction L-glutamate(out) = L-glutamate(in). It carries out the reaction chloride(in) = chloride(out). The enzyme catalyses Rb(+)(in) = Rb(+)(out). The catalysed reaction is Cs(+)(in) = Cs(+)(out). With respect to regulation, activated by various stimuli including intracellular acidic pH, mechanical stretch and polyunsaturated fatty acids such as arachidonic acid. Functionally, k(+) channel that conducts voltage-dependent outward rectifying currents upon membrane depolarization. Voltage sensing is coupled to K(+) electrochemical gradient in an 'ion flux gating' mode where outward but not inward ion flow opens the gate. Converts to voltage-independent 'leak' conductance mode upon stimulation by various stimuli including mechanical membrane stretch, acidic pH, heat and lipids. Reversibly converts between a voltage-insensitive K(+) 'leak' channel and a voltage-dependent outward rectifying K(+) channel in a phosphorylation-dependent manner. Homo- and heterodimerizes to form functional channels with distinct regulatory and gating properties. In trigeminal ganglia sensory neurons, the heterodimer of KCNK2/TREK-1 and KCNK18/TRESK inhibits neuronal firing and neurogenic inflammation by stabilizing the resting membrane potential at K(+) equilibrium potential as well as by regulating the threshold of action potentials and the spike frequency. At trigeminal A-beta afferent nerves, the heterodimer of KCNK2/TREK-1 and KCNK4/TRAAK is mostly coexpressed at nodes of Ranvier where it conducts voltage-independent mechanosensitive and thermosensitive currents, allowing rapid action potential repolarization, high speed and high frequence saltatory conduction on myelinated nerves to ensure prompt sensory responses. In hippocampal astrocytes, the heterodimer of KCNK2/TREK-1 and KCNK1/TWIK-1 allows passive K(+) conductance under basal conditions, but changes ion selectivity and becomes permeable to L-glutamate and Cl(-) ions upon binding to G-protein subunit GNG4 in stimulated astrocytes. Mediates rapid L-glutamate release in response to activation of G-protein-coupled receptors such as F2R and CNR1. In hippocampal pyramidal neurons, the homodimer of KCNK2/TREK-1 contributes to gamma-aminobutyric acid (GABA) B-induced slow inhibitory postsynaptic potential. Associates with AKAP5 and Gs-protein-coupled receptor B2AR at postsynaptic dense bodies and converts to a leak channel no longer sensitive to stimulation by arachidonic acid, acidic pH or mechanical stress, nor inhibited by Gq-coupled receptors but still under the negative control of Gs-coupled receptors. Permeable to other monovalent cations such as Rb(+) and Cs(+). Does not display channel activity but reduces the channel activity of isoform 1, isoform 2 and isoform 4 and reduces cell surface expression of isoform 2. This chain is Potassium channel subfamily K member 2, found in Rattus norvegicus (Rat).